The following is a 591-amino-acid chain: Protein phosphatase EYA1 (591 aa).

Disordered regions lie at residues 1–95, 150–169, and 239–319; these read MEMQ…SYPH, GLSQ…GTSF, and MTSS…PDSD. The span at 8 to 23 shows a compositional bias: low complexity; sequence SPHSRLSGSSESPSGP. The segment covering 28-53 has biased composition (polar residues); that stretch reads SHINSTSMTPNGTEVKTEPMSSSEIA. Positions 56-75 are enriched in low complexity; the sequence is AADGSLDSFSGSALGSSSFS. The segment covering 78–87 has biased composition (pro residues); it reads PAHPFSPPQI. The segment covering 240-252 has biased composition (low complexity); it reads TSSNTSPTTPSTN. The span at 253 to 286 shows a compositional bias: polar residues; it reads ATYQLQEPPSGVTSQAVTDPTAEYSTIHSPSTPI. The span at 287-302 shows a compositional bias: basic and acidic residues; that stretch reads KETDSERLRRGSDGKS. Residue Asp327 is the Nucleophile of the active site. Positions 327, 329, and 555 each coordinate Mg(2+). The active-site Proton donor is the Asp329.

This sequence belongs to the HAD-like hydrolase superfamily. EYA family. Probably interacts with SIX2, SIX4 and SIX5. Interacts with H2AX in response to DNA damage. Interacts with SIX3; promotes EYA1 translocation to the nucleus. Mg(2+) is required as a cofactor. In terms of processing, sumoylated with SUMO1. As to expression, extensively expressed in cranial placodes, branchial arches, CNS and developing eye and nose.

It is found in the cytoplasm. The protein localises to the nucleus. The enzyme catalyses O-phospho-L-tyrosyl-[protein] + H2O = L-tyrosyl-[protein] + phosphate. It catalyses the reaction O-phospho-L-seryl-[protein] + H2O = L-seryl-[protein] + phosphate. The catalysed reaction is O-phospho-L-threonyl-[protein] + H2O = L-threonyl-[protein] + phosphate. Functionally, functions both as protein phosphatase and as transcriptional coactivator for SIX1, and probably also for SIX2, SIX4 and SIX5. Tyrosine phosphatase that dephosphorylates 'Tyr-142' of histone H2AX (H2AXY142ph) and promotes efficient DNA repair via the recruitment of DNA repair complexes containing MDC1. 'Tyr-142' phosphorylation of histone H2AX plays a central role in DNA repair and acts as a mark that distinguishes between apoptotic and repair responses to genotoxic stress. Its function as histone phosphatase may contribute to its function in transcription regulation during organogenesis. Also has phosphatase activity with proteins phosphorylated on Ser and Thr residues (in vitro). Required for normal embryonic development of the craniofacial and trunk skeleton, kidneys and ears. Together with SIX1, it plays an important role in hypaxial muscle development; in this it is functionally redundant with EYA2. The chain is Protein phosphatase EYA1 (Eya1) from Mus musculus (Mouse).